We begin with the raw amino-acid sequence, 424 residues long: CinA-like protein (424 aa).

The protein belongs to the CinA family.

The protein is CinA-like protein of Shewanella loihica (strain ATCC BAA-1088 / PV-4).